A 238-amino-acid polypeptide reads, in one-letter code: Ribosomal RNA small subunit methyltransferase G (238 aa).

S-adenosyl-L-methionine is bound by residues Gly-77, Phe-82, 128-129 (AE), and Arg-147.

This sequence belongs to the methyltransferase superfamily. RNA methyltransferase RsmG family.

Its subcellular location is the cytoplasm. In terms of biological role, specifically methylates the N7 position of guanine in position 535 of 16S rRNA. This is Ribosomal RNA small subunit methyltransferase G from Listeria monocytogenes serotype 4b (strain CLIP80459).